Here is an 83-residue protein sequence, read N- to C-terminus: Small ribosomal subunit protein bS16 (83 aa).

It belongs to the bacterial ribosomal protein bS16 family.

The sequence is that of Small ribosomal subunit protein bS16 from Stutzerimonas stutzeri (strain A1501) (Pseudomonas stutzeri).